The primary structure comprises 491 residues: Putative ABC transporter ATP-binding protein TDE_0906 (491 aa).

ABC transporter domains follow at residues 2-241 (INLN…KQGL) and 267-491 (LTLH…KERL). Residues 36 to 43 (GKSGCGKT) and 300 to 307 (GKNGCGKT) each bind ATP.

It belongs to the ABC transporter superfamily.

The protein localises to the cell inner membrane. Probably part of an ABC transporter complex. Responsible for energy coupling to the transport system. The sequence is that of Putative ABC transporter ATP-binding protein TDE_0906 from Treponema denticola (strain ATCC 35405 / DSM 14222 / CIP 103919 / JCM 8153 / KCTC 15104).